Consider the following 520-residue polypeptide: ATP synthase subunit alpha 2 (520 aa).

G176 to T183 contributes to the ATP binding site.

The protein belongs to the ATPase alpha/beta chains family. F-type ATPases have 2 components, CF(1) - the catalytic core - and CF(0) - the membrane proton channel. CF(1) has five subunits: alpha(3), beta(3), gamma(1), delta(1), epsilon(1). CF(0) has three main subunits: a(1), b(2) and c(9-12). The alpha and beta chains form an alternating ring which encloses part of the gamma chain. CF(1) is attached to CF(0) by a central stalk formed by the gamma and epsilon chains, while a peripheral stalk is formed by the delta and b chains.

It localises to the cell inner membrane. It catalyses the reaction ATP + H2O + 4 H(+)(in) = ADP + phosphate + 5 H(+)(out). Functionally, produces ATP from ADP in the presence of a proton gradient across the membrane. The alpha chain is a regulatory subunit. In Polaromonas naphthalenivorans (strain CJ2), this protein is ATP synthase subunit alpha 2.